A 371-amino-acid chain; its full sequence is Alanine dehydrogenase (371 aa).

Substrate-binding residues include Arg-15 and Lys-74. Catalysis depends on His-95, which acts as the Proton donor/acceptor. NAD(+) is bound by residues Ser-133, 177–178 (QA), Asp-197, Ser-219, 238–239 (VL), 266–269 (IAID), Arg-279, and 298–301 (VANM). Asp-269 serves as the catalytic Proton donor/acceptor.

This sequence belongs to the AlaDH/PNT family. In terms of assembly, homohexamer. Trimer of dimer.

It carries out the reaction L-alanine + NAD(+) + H2O = pyruvate + NH4(+) + NADH + H(+). It participates in amino-acid degradation; L-alanine degradation via dehydrogenase pathway; NH(3) and pyruvate from L-alanine: step 1/1. Catalyzes the reversible reductive amination of pyruvate to L-alanine. May play a role in cell wall synthesis as L-alanine is an important constituent of the peptidoglycan layer. The polypeptide is Alanine dehydrogenase (ald) (Staphylococcus saprophyticus subsp. saprophyticus (strain ATCC 15305 / DSM 20229 / NCIMB 8711 / NCTC 7292 / S-41)).